The chain runs to 166 residues: SUMO-conjugating enzyme UBC9 (166 aa).

The UBC core domain occupies 4–157 (IAAGRLAEER…VKKEAVKYAA (154 aa)). Cys-93 functions as the Glycyl thioester intermediate in the catalytic mechanism.

It belongs to the ubiquitin-conjugating enzyme family. As to quaternary structure, interacts with brd-1 and rad-51. Interacts with smo-1 and sop-2. Interacts with bet-1 (via BROMO domain 2). Interacts with isoforms 1 and 2 of X-box-binding protein xbp-1.

It localises to the nucleus envelope. Its pathway is protein modification; protein sumoylation. Its function is as follows. Accepts the ubiquitin-like protein smo-1 from the aos-1-uba-2 E1 complex and catalyzes its covalent attachment to other proteins with the help of an E3 ligase such as gei-17. Required to sumoylate the ETS transcription factor lin-1, Polycomb protein sop-2, and intermediate filament proteins, such as ifb-1. Required for embryonic development, fertility, vulval morphogenesis, inhibition of vulval cell fates, lifespan, and neuromuscular activity. This chain is SUMO-conjugating enzyme UBC9, found in Caenorhabditis elegans.